Here is a 146-residue protein sequence, read N- to C-terminus: Large ribosomal subunit protein bL9 (146 aa).

It belongs to the bacterial ribosomal protein bL9 family.

Binds to the 23S rRNA. This Deinococcus deserti (strain DSM 17065 / CIP 109153 / LMG 22923 / VCD115) protein is Large ribosomal subunit protein bL9.